We begin with the raw amino-acid sequence, 485 residues long: Glutamyl-tRNA(Gln) amidotransferase subunit A (485 aa).

Residues K79 and S154 each act as charge relay system in the active site. S178 functions as the Acyl-ester intermediate in the catalytic mechanism.

It belongs to the amidase family. GatA subfamily. As to quaternary structure, heterotrimer of A, B and C subunits.

It carries out the reaction L-glutamyl-tRNA(Gln) + L-glutamine + ATP + H2O = L-glutaminyl-tRNA(Gln) + L-glutamate + ADP + phosphate + H(+). Its function is as follows. Allows the formation of correctly charged Gln-tRNA(Gln) through the transamidation of misacylated Glu-tRNA(Gln) in organisms which lack glutaminyl-tRNA synthetase. The reaction takes place in the presence of glutamine and ATP through an activated gamma-phospho-Glu-tRNA(Gln). The polypeptide is Glutamyl-tRNA(Gln) amidotransferase subunit A (Clostridium novyi (strain NT)).